A 148-amino-acid chain; its full sequence is Gas vesicle protein J (148 aa).

2 disordered regions span residues 1–21 (MTTT…VIPT) and 118–148 (EETT…QLEA). Polar residues predominate over residues 136-148 (VNSQEGDNSQLEA).

This sequence belongs to the gas vesicle GvpA family. As to quaternary structure, interacts with GvpA.

Its subcellular location is the gas vesicle. Functionally, a minor component of the gas vesicle, might be involved in nucleating gas vesicle formation. Gas vesicles (GV) are hollow, gas filled proteinaceous nanostructures. During planktonic growth they allow positioning of the organism at a favorable depth for light or nutrient acquisition. Cluster expression in E.coli (gvpA1-gvpA2-gvpC-gvpN-gvpJ-gvpK-gvpF-gvpG-gvpV-gvpW) allows cells to float and produces irregularly shaped gas vesicles. This is Gas vesicle protein J from Nostoc sp. (strain PCC 7120 / SAG 25.82 / UTEX 2576).